We begin with the raw amino-acid sequence, 272 residues long: Shikimate dehydrogenase (NADP(+)) (272 aa).

Shikimate contacts are provided by residues 14-16 (SKS) and threonine 61. Catalysis depends on lysine 65, which acts as the Proton acceptor. NADP(+) is bound at residue glutamate 77. Shikimate contacts are provided by asparagine 86 and aspartate 102. Residues 126–130 (GAGGA), 149–154 (NRTVSR), and methionine 213 contribute to the NADP(+) site. Residue tyrosine 215 participates in shikimate binding. Glycine 237 lines the NADP(+) pocket.

This sequence belongs to the shikimate dehydrogenase family. As to quaternary structure, homodimer.

It catalyses the reaction shikimate + NADP(+) = 3-dehydroshikimate + NADPH + H(+). Its pathway is metabolic intermediate biosynthesis; chorismate biosynthesis; chorismate from D-erythrose 4-phosphate and phosphoenolpyruvate: step 4/7. Involved in the biosynthesis of the chorismate, which leads to the biosynthesis of aromatic amino acids. Catalyzes the reversible NADPH linked reduction of 3-dehydroshikimate (DHSA) to yield shikimate (SA). The sequence is that of Shikimate dehydrogenase (NADP(+)) from Escherichia coli (strain SMS-3-5 / SECEC).